The following is a 987-amino-acid chain: AP3-complex subunit beta-A (987 aa).

Positions 586–662 (QDQLSDLDKQ…ISETSVSADQ (77 aa)) are disordered. Over residues 603–613 (DGSEESSETGD) the composition is skewed to acidic residues. Residues 614–631 (ENGSSDYDSESSNGSDFS) are compositionally biased toward low complexity.

It belongs to the adaptor complexes large subunit family. In terms of assembly, adaptor protein complex 3 (AP-3) is a heterotetramer composed of two large adaptins (delta-type subunit and beta-type subunit), a medium adaptin (mu-type subunit) and a small adaptin (sigma-type subunit).

It is found in the cytoplasm. The protein resides in the golgi apparatus. The protein localises to the cytoplasmic vesicle membrane. Its function is as follows. Part of the AP-3 complex, an adaptor-related complex which seems to be clathrin-associated. The complex is associated with the Golgi region as well as more peripheral structures. It facilitates the budding of vesicles from the Golgi membrane and may be directly involved in trafficking to the vacuole. It also function in maintaining the identity of lytic vacuoles and in regulating the transition between storage and lytic vacuoles. The chain is AP3-complex subunit beta-A (AP3BA) from Arabidopsis thaliana (Mouse-ear cress).